An 884-amino-acid chain; its full sequence is Lon protease homolog 2, peroxisomal (884 aa).

Residues leucine 12 to leucine 255 form the Lon N-terminal domain. The interval serine 67–lysine 101 is disordered. Residues serine 75–alanine 89 are compositionally biased toward gly residues. Residue glycine 408–threonine 415 coordinates ATP. One can recognise a Lon proteolytic domain in the interval valine 689–glycine 874. Catalysis depends on residues serine 780 and lysine 823. Residues serine 882–leucine 884 carry the Microbody targeting signal motif.

Belongs to the peptidase S16 family. Expressed in roots, leaves and panicles.

It is found in the peroxisome matrix. The enzyme catalyses Hydrolysis of proteins in presence of ATP.. Functionally, ATP-dependent serine protease that mediates the selective degradation of misfolded and unassembled polypeptides in the peroxisomal matrix. Necessary for type 2 peroxisome targeting signal (PTS2)-containing protein processing and facilitates peroxisome matrix protein import. The chain is Lon protease homolog 2, peroxisomal (LON1) from Oryza sativa subsp. indica (Rice).